We begin with the raw amino-acid sequence, 740 residues long: NAD(P)H-quinone oxidoreductase subunit 5, chloroplastic (740 aa).

16 helical membrane passes run W9–F29, W40–I60, I89–I109, F125–I145, I147–T167, G185–F205, N219–S239, T258–A278, V286–A306, L327–I347, A354–S374, I396–S416, W425–Y445, L543–F563, V602–V622, and S717–F737.

The protein belongs to the complex I subunit 5 family. NDH is composed of at least 16 different subunits, 5 of which are encoded in the nucleus.

The protein resides in the plastid. Its subcellular location is the chloroplast thylakoid membrane. The enzyme catalyses a plastoquinone + NADH + (n+1) H(+)(in) = a plastoquinol + NAD(+) + n H(+)(out). It carries out the reaction a plastoquinone + NADPH + (n+1) H(+)(in) = a plastoquinol + NADP(+) + n H(+)(out). NDH shuttles electrons from NAD(P)H:plastoquinone, via FMN and iron-sulfur (Fe-S) centers, to quinones in the photosynthetic chain and possibly in a chloroplast respiratory chain. The immediate electron acceptor for the enzyme in this species is believed to be plastoquinone. Couples the redox reaction to proton translocation, and thus conserves the redox energy in a proton gradient. In Solanum bulbocastanum (Wild potato), this protein is NAD(P)H-quinone oxidoreductase subunit 5, chloroplastic (ndhF).